A 93-amino-acid polypeptide reads, in one-letter code: Small ribosomal subunit protein uS19 (93 aa).

Belongs to the universal ribosomal protein uS19 family.

Protein S19 forms a complex with S13 that binds strongly to the 16S ribosomal RNA. The protein is Small ribosomal subunit protein uS19 of Cutibacterium acnes (strain DSM 16379 / KPA171202) (Propionibacterium acnes).